The chain runs to 142 residues: Hemoglobin subunit alpha-2 (142 aa).

Residues 2–142 (VLSPADKTNV…VSTVLTSKYR (141 aa)) form the Globin domain. His59 contributes to the O2 binding site. A heme b-binding site is contributed by His88.

The protein belongs to the globin family. As to quaternary structure, heterotetramer of two alpha chains and two beta chains. As to expression, red blood cells.

In terms of biological role, involved in oxygen transport from the lung to the various peripheral tissues. Functionally, hemopressin acts as an antagonist peptide of the cannabinoid receptor CNR1. Hemopressin-binding efficiently blocks cannabinoid receptor CNR1 and subsequent signaling. In Hylobates lar (Lar gibbon), this protein is Hemoglobin subunit alpha-2 (HBA2).